A 296-amino-acid polypeptide reads, in one-letter code: MKIRVGSRESKLAVKQSEIVIEAIRKYDPNIEIELVTMKTTGDIKLDQTLDKIGGKGLFIKELDQALYDDRVDITVHSFKDMPMAIDEYLPIVAVSKREDPRDVLVLPKTVKEPDFSKPIGCSSFRRKIQLQEIYPHCSVEPIRGNVLTRLEKLDRGEFSAITLALAGLKRLGLEERISRIFEVTEILPAACQGVIVVQARKGFDVSFLSDFHDKEAWDISMAERSFVRTLNGGCSSPVAAYGEIKDNYLTLTGLYVDSSNSVHKKTITGARKQGEEMGFNLALQMKGEDEVHGKD.

Residue Cys-235 is modified to S-(dipyrrolylmethanemethyl)cysteine.

The protein belongs to the HMBS family. Monomer. Dipyrromethane is required as a cofactor.

The catalysed reaction is 4 porphobilinogen + H2O = hydroxymethylbilane + 4 NH4(+). The protein operates within porphyrin-containing compound metabolism; protoporphyrin-IX biosynthesis; coproporphyrinogen-III from 5-aminolevulinate: step 2/4. Its function is as follows. Tetrapolymerization of the monopyrrole PBG into the hydroxymethylbilane pre-uroporphyrinogen in several discrete steps. The polypeptide is Porphobilinogen deaminase (Alkaliphilus oremlandii (strain OhILAs) (Clostridium oremlandii (strain OhILAs))).